The sequence spans 393 residues: MPKKKPTPIQLNPAPDGSAVNGTSSAETNLEALQKKLEELELDEQQRKRLEAFLTQKQKVGELKDDDFEKISELGAGNGGVVFKVSHKPSGLVMARKLIHLEIKPAIRNQIIRELQVLHECNSPYIVGFYGAFYSDGEISICMEHMDGGSLDQVLKKAGRIPEQILGKVSIAVIKGLTYLREKHKIMHRDVKPSNILVNSRGEIKLCDFGVSGQLIDSMANSFVGTRSYMSPERLQGTHYSVQSDIWSMGLSLVEMAVGRYPIPPPDAKELELLFGCQVEGDAAETPPRPRTPGRPLSSYGMDSRPPMAIFELLDYIVNEPPPKLPSGVFSLEFQDFVNKCLIKNPAERADLKQLMVHAFIKRSDAEEVDFAGWLCSTIGLNQPSTPTHAASI.

Residues 1–27 (MPKKKPTPIQLNPAPDGSAVNGTSSAE) form a disordered region. Residues 68–361 (FEKISELGAG…LKQLMVHAFI (294 aa)) form the Protein kinase domain. ATP is bound by residues 74–82 (LGAGNGGVV) and lysine 97. Aspartate 190 (proton acceptor) is an active-site residue. A phosphoserine; by RAF mark is found at serine 218 and serine 222. The segment at 270–307 (ELELLFGCQVEGDAAETPPRPRTPGRPLSSYGMDSRPP) is RAF1-binding. Threonine 286 bears the Phosphothreonine mark. Phosphothreonine; by MAPK1 is present on threonine 292. The residue at position 298 (serine 298) is a Phosphoserine; by PAK.

This sequence belongs to the protein kinase superfamily. STE Ser/Thr protein kinase family. MAP kinase kinase subfamily. In terms of assembly, found in a complex with at least BRAF, HRAS, MAP2K1, MAPK3/ERK1 and RGS14. Forms a heterodimer with MAP2K2/MEK2. Forms heterodimers with KSR2 which further dimerize to form tetramers. Interacts with KSR1 or KSR2 and BRAF; the interaction with KSR1 or KSR2 mediates KSR1-BRAF or KSR2-BRAF dimerization. Interacts with ARBB2, LAMTOR3, MAPK1/ERK2 and RAF1. Interacts with MAPK1/ERK2. Interacts with MORG1. Interacts with PPARG. Interacts with VRK2. Interacts with SGK1. Interacts with BIRC6/bruce. Interacts with KAT7; the interaction promotes KAT7 phosphorylation. Interacts with RAF1 and NEK10; the interaction is required for ERK1/2-signaling pathway activation in response to UV irradiation. Interacts with TRAF3IP3. Interacts with MOS. Phosphorylation at Ser-218 and Ser-222 by MAP kinase kinase kinases (BRAF or MEKK1) positively regulates kinase activity. Also phosphorylated at Thr-292 by MAPK1/ERK2 and at Ser-298 by PAK. MAPK1/ERK2 phosphorylation of Thr-292 occurs in response to cellular adhesion and leads to inhibition of Ser-298 phosphorylation by PAK. Autophosphorylated at Ser-218 and Ser-222, autophosphosphorylation is promoted by NEK10 following UV irradiation.

The protein localises to the cytoplasm. It is found in the cytoskeleton. It localises to the microtubule organizing center. The protein resides in the centrosome. Its subcellular location is the spindle pole body. The protein localises to the nucleus. It is found in the membrane. The catalysed reaction is L-seryl-[protein] + ATP = O-phospho-L-seryl-[protein] + ADP + H(+). The enzyme catalyses L-threonyl-[protein] + ATP = O-phospho-L-threonyl-[protein] + ADP + H(+). It carries out the reaction L-tyrosyl-[protein] + ATP = O-phospho-L-tyrosyl-[protein] + ADP + H(+). Its activity is regulated as follows. Ras proteins such as HRAS mediate the activation of RAF proteins such as RAF1 or BRAF which in turn activate extracellular signal-regulated kinases (ERK) through MAPK (mitogen-activated protein kinases) and ERK kinases MAP2K1/MEK1 and MAP2K2/MEK2. Activation occurs through phosphorylation of Ser-218 and Ser-222. MAP2K1/MEK1 binds KSR1 or KSR2 releasing the inhibitory intramolecular interaction between KSR1 or KSR2 protein kinase and N-terminal domains. This allows KSR1 or KSR2 dimerization with BRAF leading to BRAF activation and phosphorylation of MAP2K1. MAP2K1/MEK1 is also the target of negative feed-back regulation by its substrate kinases, such as MAPK1/ERK2. These phosphorylate MAP2K1/MEK1 on Thr-292, thereby facilitating dephosphorylation of the activating residues Ser-218 and Ser-222. Inhibited by serine/threonine phosphatase 2A. Functionally, dual specificity protein kinase which acts as an essential component of the MAP kinase signal transduction pathway. Binding of extracellular ligands such as growth factors, cytokines and hormones to their cell-surface receptors activates RAS and this initiates RAF1 activation. RAF1 then further activates the dual-specificity protein kinases MAP2K1/MEK1 and MAP2K2/MEK2. Both MAP2K1/MEK1 and MAP2K2/MEK2 function specifically in the MAPK/ERK cascade, and catalyze the concomitant phosphorylation of a threonine and a tyrosine residue in a Thr-Glu-Tyr sequence located in the extracellular signal-regulated kinases MAPK3/ERK1 and MAPK1/ERK2, leading to their activation and further transduction of the signal within the MAPK/ERK cascade. Activates BRAF in a KSR1 or KSR2-dependent manner; by binding to KSR1 or KSR2 releases the inhibitory intramolecular interaction between KSR1 or KSR2 protein kinase and N-terminal domains which promotes KSR1 or KSR2-BRAF dimerization and BRAF activation. Depending on the cellular context, this pathway mediates diverse biological functions such as cell growth, adhesion, survival and differentiation, predominantly through the regulation of transcription, metabolism and cytoskeletal rearrangements. One target of the MAPK/ERK cascade is peroxisome proliferator-activated receptor gamma (PPARG), a nuclear receptor that promotes differentiation and apoptosis. MAP2K1/MEK1 has been shown to export PPARG from the nucleus. The MAPK/ERK cascade is also involved in the regulation of endosomal dynamics, including lysosome processing and endosome cycling through the perinuclear recycling compartment (PNRC), as well as in the fragmentation of the Golgi apparatus during mitosis. The protein is Dual specificity mitogen-activated protein kinase kinase 1 of Rattus norvegicus (Rat).